The sequence spans 168 residues: Photosystem I assembly protein Ycf3 (168 aa).

TPR repeat units lie at residues 35-68, 72-105, and 120-153; these read AFTY…EIDP, SYIL…NPFL, and GEQA…TPGN.

The protein belongs to the Ycf3 family.

The protein localises to the plastid. It is found in the chloroplast thylakoid membrane. In terms of biological role, essential for the assembly of the photosystem I (PSI) complex. May act as a chaperone-like factor to guide the assembly of the PSI subunits. The polypeptide is Photosystem I assembly protein Ycf3 (Amborella trichopoda).